The sequence spans 570 residues: CRISPR-associated protein Cas8a1/Csx13 (570 aa).

2 disordered regions span residues 1–23 (MACM…AGLR) and 551–570 (GGEA…SEQS).

Belongs to the CRISPR-associated protein Cas8a1/Csx13 family. Myxan subtype subfamily.

Its function is as follows. CRISPR (clustered regularly interspaced short palindromic repeat) is an adaptive immune system that provides protection against mobile genetic elements (viruses, transposable elements and conjugative plasmids). CRISPR clusters contain spacers, sequences complementary to antecedent mobile elements, and target invading nucleic acids. CRISPR clusters are transcribed and processed into CRISPR RNA (crRNA). Functionally, functions in an unknown fashion to stimulate transcription of fruA independently of the intracellular A- and E-developmental signals. This chain is CRISPR-associated protein Cas8a1/Csx13 (devT), found in Myxococcus xanthus (strain DK1622).